We begin with the raw amino-acid sequence, 116 residues long: Tachykinin-3 (116 aa).

The N-terminal stretch at 1–20 (MRSAMLFAAVLALSLAWTFG) is a signal peptide. Residues 21-79 (AACEEPQEQGGRLSKDSDLSLLPPPLLRRLYDSRSISLEGLLKVLSKASVGPKETSLPQ) constitute a propeptide that is removed on maturation. A Methionine amide modification is found at methionine 91. The tract at residues 92 to 116 (GKRNSQPDTPADVVEENTPSFGVLK) is disordered. Positions 95–116 (NSQPDTPADVVEENTPSFGVLK) are excised as a propeptide.

Belongs to the tachykinin family.

It is found in the secreted. Its function is as follows. Tachykinins are active peptides which excite neurons, evoke behavioral responses, are potent vasodilators and secretagogues, and contract (directly or indirectly) many smooth muscles. Is a critical central regulator of gonadal function. This chain is Tachykinin-3 (Tac3), found in Rattus norvegicus (Rat).